The primary structure comprises 450 residues: Tubulin alpha chain (450 aa).

Q11 lines the GTP pocket. Position 40 is an N6-acetyllysine (K40). The GTP site is built by E71, S140, G144, T145, T179, N206, and N228. E71 is a Mg(2+) binding site. E254 is a catalytic residue.

It belongs to the tubulin family. Dimer of alpha and beta chains. A typical microtubule is a hollow water-filled tube with an outer diameter of 25 nm and an inner diameter of 15 nM. Alpha-beta heterodimers associate head-to-tail to form protofilaments running lengthwise along the microtubule wall with the beta-tubulin subunit facing the microtubule plus end conferring a structural polarity. Microtubules usually have 13 protofilaments but different protofilament numbers can be found in some organisms and specialized cells. Mg(2+) is required as a cofactor. In terms of processing, acetylation of alpha chains at Lys-40 stabilizes microtubules and affects affinity and processivity of microtubule motors. This modification has a role in multiple cellular functions, ranging from cell motility, cell cycle progression or cell differentiation to intracellular trafficking and signaling.

It localises to the cytoplasm. It is found in the cytoskeleton. It carries out the reaction GTP + H2O = GDP + phosphate + H(+). Tubulin is the major constituent of microtubules, a cylinder consisting of laterally associated linear protofilaments composed of alpha- and beta-tubulin heterodimers. Microtubules grow by the addition of GTP-tubulin dimers to the microtubule end, where a stabilizing cap forms. Below the cap, tubulin dimers are in GDP-bound state, owing to GTPase activity of alpha-tubulin. The protein is Tubulin alpha chain of Euplotoides octocarinatus (Freshwater ciliate).